We begin with the raw amino-acid sequence, 279 residues long: Threonylcarbamoyl-AMP synthase (279 aa).

The transit peptide at 1 to 55 directs the protein to the mitochondrion; the sequence is MSPARRCRGMRAAVAASVGLSEGPAGSRSGRLFRPPSPAPAAPGARLLRLPGSGA. A disordered region spans residues 21–41; it reads SEGPAGSRSGRLFRPPSPAPA. Position 60 is a phosphoserine (S60). Residues 67–257 enclose the YrdC-like domain; it reads TEALRAAVAE…KFGIIRPGCA (191 aa).

The protein belongs to the SUA5 family. Interacts with RSC1A1. As to expression, ubiquitously expressed.

The protein resides in the cytoplasm. The protein localises to the mitochondrion. It localises to the cell membrane. The enzyme catalyses L-threonine + hydrogencarbonate + ATP = L-threonylcarbamoyladenylate + diphosphate + H2O. Cytoplasmic and mitochondrial threonylcarbamoyl-AMP synthase required for the formation of a threonylcarbamoyl group on adenosine at position 37 (t(6)A37) in tRNAs that read codons beginning with adenine. Catalyzes the conversion of L-threonine, HCO(3)(-)/CO(2) and ATP to give threonylcarbamoyl-AMP (TC-AMP) as the acyladenylate intermediate, with the release of diphosphate. Participates in t(6)A37 formation in cytoplasmic and mitochondrial tRNAs. May regulate the activity of some transporters. This Homo sapiens (Human) protein is Threonylcarbamoyl-AMP synthase.